Reading from the N-terminus, the 670-residue chain is Transcription factor Ken 2 (670 aa).

The BTB domain occupies 108–176; it reads TDLLLICDGK…LYSGQVYVRS (69 aa). 2 disordered regions span residues 200–288 and 307–470; these read SDGS…DRDR and NNHP…SDDA. Residues 218-230 show a composition bias toward polar residues; that stretch reads NRNTEGITGSSVV. A compositionally biased stretch (basic residues) spans 325–338; the sequence is HHLHHHHHHHHRQL. Gly residues-rich tracts occupy residues 351 to 368 and 389 to 400; these read GGGSGNDGASEGGSGESG and SGGGGAGSGRRS. The segment covering 407 to 419 has biased composition (acidic residues); it reads EPAEDDEDYELDV. Residues 451–464 show a composition bias toward polar residues; it reads SDPVNLSIVKQQQD. The C2H2-type 1; degenerate zinc finger occupies 586-594; the sequence is NLKTHLRVH. 2 consecutive C2H2-type zinc fingers follow at residues 600 to 623 and 636 to 658; these read FACRLCVAMFKQKAHLLKHLCSVH and YTCCFCSLVFETLQELVRHLSGH.

The protein resides in the nucleus. Its function is as follows. Transcription factor required for terminalia development. Negative regulator of the JAK/STAT pathway: represses JAK/STAT-dependent expression of ventral veins lacking (vvl) in the posterior spiracles. The sequence is that of Transcription factor Ken 2 from Culex quinquefasciatus (Southern house mosquito).